We begin with the raw amino-acid sequence, 246 residues long: N-alpha-acetyltransferase 11 (246 aa).

Residues 1 to 58 (MNIRNARPEDLMNMQHCNLLCLPENYQMKYYFYHGLSWPQLSYIAEDEDGKIVGYVLA) form an interaction with NAA15 region. An N-acetyltransferase domain is found at 1 to 152 (MNIRNARPED…DAYAMKRDLA (152 aa)). Positions 175–246 (EENQEAQDST…DSSEYLDSTS (72 aa)) are disordered. A compositionally biased stretch (polar residues) spans 230–246 (SHSTDVQDSSEYLDSTS).

Belongs to the acetyltransferase family. ARD1 subfamily. Component of the N-terminal acetyltransferase A (NatA) complex composed of NAA11 and NAA15. Interacts with HIF1A.

It localises to the cytoplasm. Its subcellular location is the nucleus. It carries out the reaction N-terminal glycyl-[protein] + acetyl-CoA = N-terminal N(alpha)-acetylglycyl-[protein] + CoA + H(+). The catalysed reaction is N-terminal L-alanyl-[protein] + acetyl-CoA = N-terminal N(alpha)-acetyl-L-alanyl-[protein] + CoA + H(+). It catalyses the reaction N-terminal L-seryl-[protein] + acetyl-CoA = N-terminal N(alpha)-acetyl-L-seryl-[protein] + CoA + H(+). The enzyme catalyses N-terminal L-valyl-[protein] + acetyl-CoA = N-terminal N(alpha)-acetyl-L-valyl-[protein] + CoA + H(+). It carries out the reaction N-terminal L-cysteinyl-[protein] + acetyl-CoA = N-terminal N(alpha)-acetyl-L-cysteinyl-[protein] + CoA + H(+). The catalysed reaction is N-terminal L-threonyl-[protein] + acetyl-CoA = N-terminal N(alpha)-acetyl-L-threonyl-[protein] + CoA + H(+). Its function is as follows. Displays alpha (N-terminal) acetyltransferase activity. Proposed alternative catalytic subunit of the N-terminal acetyltransferase A (NatA) complex. The polypeptide is N-alpha-acetyltransferase 11 (Naa11) (Rattus norvegicus (Rat)).